A 409-amino-acid polypeptide reads, in one-letter code: Aquaporin-10 (409 aa).

Disordered regions lie at residues 1–24 and 47–74; these read MADA…TTMP and ADVN…RPLV. The span at 12-22 shows a compositional bias: low complexity; it reads TTGTATTAPTT. The next 2 membrane-spanning stretches (helical) occupy residues 110–130 and 138–158; these read FLGS…VVLS and LSIN…AGGI. Positions 164–166 match the NPA 1 motif; that stretch reads NPA. A helical membrane pass occupies residues 184–204; that stretch reads VYMFAQYAGCICASAIVHAIY. N-linked (GlcNAc...) asparagine glycosylation occurs at asparagine 215. 2 helical membrane passes run 241-261 and 270-290; these read TGLA…LALT and GGVV…AYGF. The NPA 2 signature appears at 297 to 299; it reads NPA. The chain crosses the membrane as a helical span at residues 339-359; the sequence is IPVVGPHLGALLGAAIYFFFI.

Belongs to the MIP/aquaporin (TC 1.A.8) family.

The protein localises to the cell membrane. In terms of biological role, aquaglyceroporin that may modulate the water content and osmolytes during anhydrobiosis. This chain is Aquaporin-10, found in Milnesium tardigradum (Water bear).